The primary structure comprises 964 residues: Reticulon-3 (964 aa).

The segment covering 1–24 (MAESSAATQSPSVSSSSSGAEPSA) has biased composition (low complexity). Disordered stretches follow at residues 1 to 32 (MAES…GGSP), 68 to 109 (AGLS…SETL), and 179 to 200 (WVVK…DRSA). Alanine 2 is modified (N-acetylalanine). Topologically, residues 2–795 (AESSAATQSP…KKTGFVFGTT (794 aa)) are cytoplasmic. Position 31 is a phosphoserine (serine 31). Residues 80–91 (SKSMTSSFLSSS) show a composition bias toward low complexity. Residues serine 217, serine 225, serine 230, serine 233, serine 270, serine 303, and serine 429 each carry the phosphoserine modification. The segment at 479–536 (ITEKPDSLPSAAAKTSEREIKETPSRETVRSEMCENSEQPQAQPETPTQKSLEGEVAS) is disordered. A compositionally biased stretch (basic and acidic residues) spans 493–511 (TSEREIKETPSRETVRSEM). A compositionally biased stretch (low complexity) spans 516–527 (EQPQAQPETPTQ). Serine 529 carries the post-translational modification Phosphoserine. Threonine 593 is modified (phosphothreonine). 3 positions are modified to phosphoserine: serine 596, serine 597, and serine 673. Disordered stretches follow at residues 645-674 (ELSG…TMSP) and 697-723 (VQDE…SSSD). The segment covering 712 to 723 (FAPQSGPQSSSD) has biased composition (polar residues). The Reticulon domain occupies 776 to 964 (VHDLIFWRDV…LPGIAKKKAE (189 aa)). Positions 796 to 819 (LIMLLSLAAFSVISVVSYLILALL) form an intramembrane region, helical. The Cytoplasmic segment spans residues 820-876 (SVTISFRVYKSVIQAVQKSEEGHPFKAYLDVDITLSSEAFHNYMNAAMVHVNKALKL). Positions 877 to 899 (IIRLFLVEDLVDSLKLAVFMWLM) form an intramembrane region, helical. Residues 900–903 (TYVG) are Cytoplasmic-facing. An intramembrane region (helical) is located at residues 904 to 926 (AVFNGITLLILAELLVFSVPIVY). Residues 919-964 (VFSVPIVYEKYKTQIDHYVGIARDQTKSIVEKIQAKLPGIAKKKAE) are interaction with FADD. The Cytoplasmic segment spans residues 927–964 (EKYKTQIDHYVGIARDQTKSIVEKIQAKLPGIAKKKAE). An interaction with BACE1 region spans residues 932 to 934 (QID).

In terms of assembly, homodimer. Interacts with RTN4. Isoform 3 interacts with BACE1, BACE2, BCL2 and FADD. Interacts with ATL1 and ATL2. Isoform 3 interacts with TMEM33. Interacts with ZFYVE27 and with KIF5A in a ZFYVE27-dependent manner. Interacts with RIGI. Interacts with TRIM25. In terms of tissue distribution, isoform 1, isoform 3, isoform 4 and isoform 5 are expressed in spinal cord. Isoform 1 is present in brain, where it is expressed in the neurons of cerebral cortex, hippocampus, hypothalamus and cerebellum (at protein level).

Its subcellular location is the endoplasmic reticulum membrane. It localises to the golgi apparatus membrane. In terms of biological role, may be involved in membrane trafficking in the early secretory pathway. Inhibits BACE1 activity and amyloid precursor protein processing. May induce caspase-8 cascade and apoptosis. May favor BCL2 translocation to the mitochondria upon endoplasmic reticulum stress. Induces the formation of endoplasmic reticulum tubules. Also acts as an inflammation-resolving regulator by interacting with both TRIM25 and RIGI, subsequently impairing RIGI 'Lys-63'-linked polyubiquitination leading to IRF3 and NF-kappa-B inhibition. In Mus musculus (Mouse), this protein is Reticulon-3 (Rtn3).